A 164-amino-acid chain; its full sequence is ATP synthase subunit b (164 aa).

A helical transmembrane segment spans residues 10-32 (AVAFVLFFVLFGKKLWTPLAAAL).

The protein belongs to the ATPase B chain family. As to quaternary structure, F-type ATPases have 2 components, F(1) - the catalytic core - and F(0) - the membrane proton channel. F(1) has five subunits: alpha(3), beta(3), gamma(1), delta(1), epsilon(1). F(0) has three main subunits: a(1), b(2) and c(10-14). The alpha and beta chains form an alternating ring which encloses part of the gamma chain. F(1) is attached to F(0) by a central stalk formed by the gamma and epsilon chains, while a peripheral stalk is formed by the delta and b chains.

It is found in the cell inner membrane. Its function is as follows. F(1)F(0) ATP synthase produces ATP from ADP in the presence of a proton or sodium gradient. F-type ATPases consist of two structural domains, F(1) containing the extramembraneous catalytic core and F(0) containing the membrane proton channel, linked together by a central stalk and a peripheral stalk. During catalysis, ATP synthesis in the catalytic domain of F(1) is coupled via a rotary mechanism of the central stalk subunits to proton translocation. Component of the F(0) channel, it forms part of the peripheral stalk, linking F(1) to F(0). The polypeptide is ATP synthase subunit b (Gluconacetobacter diazotrophicus (strain ATCC 49037 / DSM 5601 / CCUG 37298 / CIP 103539 / LMG 7603 / PAl5)).